A 936-amino-acid polypeptide reads, in one-letter code: VPS35 endosomal protein-sorting factor-like (936 aa).

2 disordered regions span residues 43–69 and 87–113; these read SKTK…VDPL and DPAA…VGPD. Over residues 51–69 the composition is skewed to low complexity; it reads KGSTSSTSSSSSSSVVDPL. Residue serine 265 is modified to Phosphoserine. Residues 672–692 form a helical membrane-spanning segment; it reads AFVRACVAYCFITIPSLVGIF.

The protein belongs to the VPS35L family. In terms of assembly, component of the heterotrimeric retriever complex formed by VPS26C, VPS29 and VPS35L. Interacts with VPS29. Interacts with COMMD1, CCDC93 and CCDC22; associates with the CCC (COMMD/CCDC22/CCDC93) complex which contains at least COMMD1 (and possibly other COMM domain-containing proteins), CCDC22 and CCDC93. Interacts with WASHC1, WASHC2A and WASHC2C. Interacts with SNX17 and SNX31.

It is found in the membrane. Its subcellular location is the endosome. Its function is as follows. Acts as a component of the retriever complex. The retriever complex is a heterotrimeric complex related to retromer cargo-selective complex (CSC) and essential for retromer-independent retrieval and recycling of numerous cargos such as integrin alpha-5/beta-1 (ITGA5:ITGB1). The recruitment of the retriever complex to the endosomal membrane involves CCC and WASH complexes. In the endosomes, drives the retrieval and recycling of NxxY-motif-containing cargo proteins by coupling to SNX17, a cargo essential for the homeostatic maintenance of numerous cell surface proteins associated with processes that include cell migration, cell adhesion, nutrient supply and cell signaling. Involved in copper-dependent ATP7A trafficking between the trans-Golgi network and vesicles in the cell periphery; the function is proposed to depend on its association with the CCC complex and cooperation with the WASH complex on early endosomes. Seems not to be required for CCC complex stability. This is VPS35 endosomal protein-sorting factor-like from Rattus norvegicus (Rat).